Consider the following 85-residue polypeptide: Large ribosomal subunit protein bL31B (85 aa).

This sequence belongs to the bacterial ribosomal protein bL31 family. Type B subfamily. Part of the 50S ribosomal subunit.

The chain is Large ribosomal subunit protein bL31B from Micrococcus luteus (strain ATCC 4698 / DSM 20030 / JCM 1464 / CCM 169 / CCUG 5858 / IAM 1056 / NBRC 3333 / NCIMB 9278 / NCTC 2665 / VKM Ac-2230) (Micrococcus lysodeikticus).